Here is a 307-residue protein sequence, read N- to C-terminus: Small ribosomal subunit biogenesis GTPase RsgA (307 aa).

The CP-type G domain maps to 78–240; it reads HKTAFGHLIA…VIDTPGIKEL (163 aa). GTP is bound by residues 128 to 131 and 182 to 190; these read NKSD and GHSGVGKST. Zn(2+)-binding residues include Cys-264, Cys-269, His-271, and Cys-277.

Belongs to the TRAFAC class YlqF/YawG GTPase family. RsgA subfamily. Monomer. Associates with 30S ribosomal subunit, binds 16S rRNA. Requires Zn(2+) as cofactor.

It localises to the cytoplasm. Functionally, one of several proteins that assist in the late maturation steps of the functional core of the 30S ribosomal subunit. Helps release RbfA from mature subunits. May play a role in the assembly of ribosomal proteins into the subunit. Circularly permuted GTPase that catalyzes slow GTP hydrolysis, GTPase activity is stimulated by the 30S ribosomal subunit. The protein is Small ribosomal subunit biogenesis GTPase RsgA of Cytophaga hutchinsonii (strain ATCC 33406 / DSM 1761 / CIP 103989 / NBRC 15051 / NCIMB 9469 / D465).